The chain runs to 489 residues: Ubiquitin carboxyl-terminal hydrolase 14 (489 aa).

Residues 102–458 (CGLANLGNTC…SAYVLLYEAR (357 aa)) form the USP domain. The active-site Nucleophile is Cys-111. Catalysis depends on His-409, which acts as the Proton acceptor. The disordered stretch occupies residues 467 to 489 (PPAPVPTEVAADTAEPMEVSEKQ).

Belongs to the peptidase C19 family. USP14/UBP6 subfamily.

The catalysed reaction is Thiol-dependent hydrolysis of ester, thioester, amide, peptide and isopeptide bonds formed by the C-terminal Gly of ubiquitin (a 76-residue protein attached to proteins as an intracellular targeting signal).. In terms of biological role, proteasome-associated deubiquitinase which releases ubiquitin from the proteasome targeted ubiquitinated proteins. Ensures the regeneration of ubiquitin at the proteasome. This Caenorhabditis elegans protein is Ubiquitin carboxyl-terminal hydrolase 14 (usp-14).